The following is a 119-amino-acid chain: uncharacterized protein (119 aa).

This is an uncharacterized protein from Homo sapiens (Human).